Here is a 308-residue protein sequence, read N- to C-terminus: Aspartate carbamoyltransferase catalytic subunit (308 aa).

R57 and T58 together coordinate carbamoyl phosphate. Position 86 (K86) interacts with L-aspartate. The carbamoyl phosphate site is built by R107, H135, and Q138. L-aspartate contacts are provided by R168 and R229. Positions 268 and 269 each coordinate carbamoyl phosphate.

Belongs to the aspartate/ornithine carbamoyltransferase superfamily. ATCase family. In terms of assembly, heterooligomer of catalytic and regulatory chains.

The catalysed reaction is carbamoyl phosphate + L-aspartate = N-carbamoyl-L-aspartate + phosphate + H(+). Its pathway is pyrimidine metabolism; UMP biosynthesis via de novo pathway; (S)-dihydroorotate from bicarbonate: step 2/3. Catalyzes the condensation of carbamoyl phosphate and aspartate to form carbamoyl aspartate and inorganic phosphate, the committed step in the de novo pyrimidine nucleotide biosynthesis pathway. The sequence is that of Aspartate carbamoyltransferase catalytic subunit from Thermococcus gammatolerans (strain DSM 15229 / JCM 11827 / EJ3).